We begin with the raw amino-acid sequence, 396 residues long: Ornithine aminotransferase 2 (396 aa).

Lys255 carries the N6-(pyridoxal phosphate)lysine modification.

It belongs to the class-III pyridoxal-phosphate-dependent aminotransferase family. OAT subfamily. The cofactor is pyridoxal 5'-phosphate.

It is found in the cytoplasm. The catalysed reaction is a 2-oxocarboxylate + L-ornithine = L-glutamate 5-semialdehyde + an L-alpha-amino acid. It functions in the pathway amino-acid biosynthesis; L-proline biosynthesis; L-glutamate 5-semialdehyde from L-ornithine: step 1/1. Functionally, catalyzes the interconversion of ornithine to glutamate semialdehyde. In Staphylococcus aureus (strain MRSA252), this protein is Ornithine aminotransferase 2.